We begin with the raw amino-acid sequence, 131 residues long: Maturin (131 aa).

A Phosphotyrosine modification is found at Tyr34. Positions 107-120 (FEEYSADVEEEEPE) are enriched in acidic residues. Positions 107-131 (FEEYSADVEEEEPEADHPQMGVSQQ) are disordered.

This sequence belongs to the MTURN family. Post-translationally, phosphorylation at Tyr-34 is essential for its ability to promote megakaryocyte differentiation. As to expression, expressed in the thymus, bone marrow and spleen.

The protein localises to the cytoplasm. Promotes megakaryocyte differentiation by enhancing ERK and JNK signaling as well as up-regulating RUNX1 and FLI1 expression. Represses NF-kappa-B transcriptional activity by inhibiting phosphorylation of RELA at 'Ser- 536'. May be involved in early neuronal development. The chain is Maturin (Mturn) from Mus musculus (Mouse).